Reading from the N-terminus, the 326-residue chain is Tetraacyldisaccharide 4'-kinase (326 aa).

58-65 serves as a coordination point for ATP; sequence SVGGNGKT.

Belongs to the LpxK family.

The enzyme catalyses a lipid A disaccharide + ATP = a lipid IVA + ADP + H(+). It functions in the pathway glycolipid biosynthesis; lipid IV(A) biosynthesis; lipid IV(A) from (3R)-3-hydroxytetradecanoyl-[acyl-carrier-protein] and UDP-N-acetyl-alpha-D-glucosamine: step 6/6. Functionally, transfers the gamma-phosphate of ATP to the 4'-position of a tetraacyldisaccharide 1-phosphate intermediate (termed DS-1-P) to form tetraacyldisaccharide 1,4'-bis-phosphate (lipid IVA). This is Tetraacyldisaccharide 4'-kinase from Pseudoalteromonas translucida (strain TAC 125).